The primary structure comprises 428 residues: Glutamate-1-semialdehyde 2,1-aminomutase (428 aa).

Lys-265 bears the N6-(pyridoxal phosphate)lysine mark.

Belongs to the class-III pyridoxal-phosphate-dependent aminotransferase family. HemL subfamily. In terms of assembly, homodimer. Pyridoxal 5'-phosphate serves as cofactor.

It localises to the cytoplasm. It carries out the reaction (S)-4-amino-5-oxopentanoate = 5-aminolevulinate. It participates in porphyrin-containing compound metabolism; protoporphyrin-IX biosynthesis; 5-aminolevulinate from L-glutamyl-tRNA(Glu): step 2/2. In Shewanella woodyi (strain ATCC 51908 / MS32), this protein is Glutamate-1-semialdehyde 2,1-aminomutase.